The following is a 148-amino-acid chain: Large ribosomal subunit protein uL15 (148 aa).

The segment at 1–46 is disordered; the sequence is MITIEDLKPTPGSNKKYKRLGRGQGSGKGKTAGKGHKGQKSRGTGK. Over residues 31 to 45 the composition is skewed to basic residues; that stretch reads TAGKGHKGQKSRGTG.

Belongs to the universal ribosomal protein uL15 family. In terms of assembly, part of the 50S ribosomal subunit.

In terms of biological role, binds to the 23S rRNA. This is Large ribosomal subunit protein uL15 from Fervidobacterium nodosum (strain ATCC 35602 / DSM 5306 / Rt17-B1).